Consider the following 347-residue polypeptide: MKPPIFIIIMSTVISGTVIVMTSSHWMLTWIGFEMNMLAIIPILMKKFNPRAMEASTKYFLTQATASMLLMMGIIINLLHSGQWTVSNNLNPMASILMTTALAMKLGLAPFHFWVPEVTQGISLSSGMILLTWQKIAPLSILYQISPTINPHLLLPMAILSVLIGGWGGLNQTQLRKIMAYSSIAHMGWMAAILLYNPTMMFLNLIIYITMTLTTFMLFMLNSATTTLSLSQTWNKAPLITSLILTLMLSLGGLPPLSGFTPKWMIIQELTKNEMIILPTFLAITALLNLYFYMRLTYATALTMFPSTNNMKMKWQFESTKKTIFLPPLIIISTMMLPLTPMISILD.

Helical transmembrane passes span 3 to 23 (PPIF…VMTS), 25 to 45 (HWML…PILM), 59 to 79 (YFLT…INLL), 96 to 116 (ILMT…FWVP), 122 to 142 (ISLS…LSIL), 149 to 169 (INPH…GWGG), 178 to 198 (IMAY…LYNP), 201 to 221 (MFLN…LFML), 237 to 257 (APLI…LPPL), 274 to 294 (EMII…YFYM), and 323 to 343 (TIFL…TPMI).

This sequence belongs to the complex I subunit 2 family. As to quaternary structure, core subunit of respiratory chain NADH dehydrogenase (Complex I) which is composed of 45 different subunits. Interacts with TMEM242.

It localises to the mitochondrion inner membrane. It catalyses the reaction a ubiquinone + NADH + 5 H(+)(in) = a ubiquinol + NAD(+) + 4 H(+)(out). Functionally, core subunit of the mitochondrial membrane respiratory chain NADH dehydrogenase (Complex I) which catalyzes electron transfer from NADH through the respiratory chain, using ubiquinone as an electron acceptor. Essential for the catalytic activity and assembly of complex I. In Viverra tangalunga (Malayan civet), this protein is NADH-ubiquinone oxidoreductase chain 2.